A 465-amino-acid polypeptide reads, in one-letter code: MEPQPGGARSCRRGAPGGACELNTATESAAPMSLAIHSTTGTRYDLSVPHDETVEGLRKRLSQRLKVPKERLALLHKDTRLSSGKLQEFGVGDGSKLTLVPTVEAGLMSQASRPEQSVMQALESLTETQVSDFLSGRSPLTLALRVGDHMMFVQLQLAAQHAPLQHRHVLAAAAAAAAAARGDSSVATPVSSPCRPVSSAARVPPVSSSPSSPVSPSPVTAGSFRSHAASTTCPEQMDCSPPASSSSTSTPGSSPTPRSRKPGAVIESFVNHAPGVFSGTFSGTLHPNCQDSSGRPRRDIGTILQILNDLLSATRHYQGMPPSLTQLRCHAQCSPASPAPDLTPKTTSCEKLAATSSTSLLQGQSQIRMCKPPGDRLRQTENRATRCKVERLQLLLQQKRLRRKARRDARGPYHWTPSRKAGRSDSSSSGGGGGPSEATGLGLDFEDSVWKPEVNPDIQSEFVVA.

The Ubiquitin-like domain maps to 32-106 (MSLAIHSTTG…LTLVPTVEAG (75 aa)). Disordered stretches follow at residues 185-262 (SVAT…SRKP) and 400-445 (RLRR…GLDF). Low complexity-rich tracts occupy residues 195 to 219 (RPVS…PSPV) and 240 to 257 (SPPA…SPTP). The tract at residues 397-424 (QQKRLRRKARRDARGPYHWTPSRKAGRS) is required for nucleolar localization.

In terms of assembly, interacts with GCK; the interaction occurs preferentially at low glucose levels. Interacts with the proteasome. As to expression, expressed at high levels in brain and liver with significantly lower levels in muscle.

It is found in the nucleus. Its subcellular location is the cytoplasm. It localises to the cytosol. The protein localises to the nucleolus. Functionally, facilitates the ubiquitin-independent proteasomal degradation of stimulus-induced transcription factors such as FOSB, EGR1, NR4A1, and IRF4 to the proteasome for degradation. Promotes also the degradation of other substrates such as CBX4. Plays a role in inhibiting the activity of glucokinase GCK and both glucose-induced and basal insulin secretion. In Mus musculus (Mouse), this protein is Midnolin (Midn).